The sequence spans 92 residues: Cell division topological specificity factor (92 aa).

It belongs to the MinE family.

In terms of biological role, prevents the cell division inhibition by proteins MinC and MinD at internal division sites while permitting inhibition at polar sites. This ensures cell division at the proper site by restricting the formation of a division septum at the midpoint of the long axis of the cell. The protein is Cell division topological specificity factor of Colwellia psychrerythraea (strain 34H / ATCC BAA-681) (Vibrio psychroerythus).